We begin with the raw amino-acid sequence, 310 residues long: Putative S-adenosyl-L-methionine-dependent methyltransferase MUL_4763 (310 aa).

Residues Asp137 and 166-167 (DL) contribute to the S-adenosyl-L-methionine site.

This sequence belongs to the UPF0677 family.

Its function is as follows. Exhibits S-adenosyl-L-methionine-dependent methyltransferase activity. The polypeptide is Putative S-adenosyl-L-methionine-dependent methyltransferase MUL_4763 (Mycobacterium ulcerans (strain Agy99)).